Consider the following 693-residue polypeptide: Homeobox protein caupolican (693 aa).

Disordered stretches follow at residues 20–104 (TANT…PSRG), 288–331 (NKMT…PGNQ), 387–453 (AQSH…DCGI), 480–538 (YLGQ…PLSM), 561–627 (MHLP…SMHS), and 648–693 (YGHG…RSGS). A compositionally biased stretch (low complexity) spans 41–59 (ASLSPSGGSTATGLTAGPL). A DNA-binding region (homeobox; TALE-type) is located at residues 226 to 288 (LAARRKNATR…NARRRLKKEN (63 aa)). 2 stretches are compositionally biased toward basic and acidic residues: residues 288-298 (NKMTWEPKNKT) and 308-317 (DDEKEKDAGD). Low complexity-rich tracts occupy residues 397–419 (HPQQ…QLQH) and 493–515 (QQLP…QQQQ). Residues 516 to 527 (QHHHHPHHHHPH) show a composition bias toward basic residues. The span at 609–627 (SSGGSSSSSGSSHSSSMHS) shows a compositional bias: low complexity. Residues 651–675 (GHSHGHGHGHGHGLGHGHGLGHGHG) are compositionally biased toward basic residues.

Belongs to the TALE/IRO homeobox family.

It is found in the nucleus. In terms of biological role, controls proneural and vein forming genes. Positive transcriptional controller of ac-sc (achaete-scute). May act as an activator that interacts with the transcriptional complex assembled on the ac and sc promoters and participates in transcription initiation. This is Homeobox protein caupolican (caup) from Drosophila melanogaster (Fruit fly).